Consider the following 116-residue polypeptide: Protein RALF-like 33 (116 aa).

The first 23 residues, 1–23 (MRGLSTKPVAIIIAILTVHFLFA), serve as a signal peptide directing secretion. Residues 24 to 67 (AVTSQSSGDFVPIESKCNGTIAECSLSTAEEEFEMDSEINRRIL) constitute a propeptide, removed in mature form. Asn-41 carries an N-linked (GlcNAc...) asparagine glycan. 2 disulfide bridges follow: Cys-85–Cys-95 and Cys-108–Cys-114.

It belongs to the plant rapid alkalinization factor (RALF) family. Post-translationally, proteolytically cleaved, probably by S1P, a subtilisin-like serine protease (subtilase). As to expression, expressed in roots, stems, leaves and plants.

It is found in the secreted. Cell signaling peptide that may regulate plant stress, growth, and development. Mediates a rapid alkalinization of extracellular space by mediating a transient increase in the cytoplasmic Ca(2+) concentration leading to a calcium-dependent signaling events through a cell surface receptor and a concomitant activation of some intracellular mitogen-activated protein kinases. This Arabidopsis thaliana (Mouse-ear cress) protein is Protein RALF-like 33 (RALFL33).